The following is a 273-amino-acid chain: Tryptophan synthase alpha chain (273 aa).

Catalysis depends on proton acceptor residues E56 and D67.

This sequence belongs to the TrpA family. Tetramer of two alpha and two beta chains.

The enzyme catalyses (1S,2R)-1-C-(indol-3-yl)glycerol 3-phosphate + L-serine = D-glyceraldehyde 3-phosphate + L-tryptophan + H2O. It participates in amino-acid biosynthesis; L-tryptophan biosynthesis; L-tryptophan from chorismate: step 5/5. Functionally, the alpha subunit is responsible for the aldol cleavage of indoleglycerol phosphate to indole and glyceraldehyde 3-phosphate. The sequence is that of Tryptophan synthase alpha chain from Shewanella baltica (strain OS185).